Consider the following 480-residue polypeptide: 6-phosphogluconate dehydrogenase, decarboxylating (480 aa).

NADP(+) contacts are provided by residues 11–16, 34–36, 76–78, and Asn104; these read GLAVMG, NRS, and IKA. Substrate contacts are provided by residues Asn104 and 130–132; that span reads SGG. Lys184 (proton acceptor) is an active-site residue. 187–188 provides a ligand contact to substrate; that stretch reads HN. Residue Glu191 is the Proton donor of the active site. The substrate site is built by Tyr192, Lys261, Arg288, Arg448, and His454.

Belongs to the 6-phosphogluconate dehydrogenase family. Homodimer.

It carries out the reaction 6-phospho-D-gluconate + NADP(+) = D-ribulose 5-phosphate + CO2 + NADPH. It functions in the pathway carbohydrate degradation; pentose phosphate pathway; D-ribulose 5-phosphate from D-glucose 6-phosphate (oxidative stage): step 3/3. Its function is as follows. Catalyzes the oxidative decarboxylation of 6-phosphogluconate to ribulose 5-phosphate and CO(2), with concomitant reduction of NADP to NADPH. In Chlamydia trachomatis serovar D (strain ATCC VR-885 / DSM 19411 / UW-3/Cx), this protein is 6-phosphogluconate dehydrogenase, decarboxylating (gnd).